The sequence spans 185 residues: Ribosome-recycling factor (185 aa).

This sequence belongs to the RRF family.

It localises to the cytoplasm. In terms of biological role, responsible for the release of ribosomes from messenger RNA at the termination of protein biosynthesis. May increase the efficiency of translation by recycling ribosomes from one round of translation to another. The chain is Ribosome-recycling factor from Klebsiella pneumoniae (strain 342).